A 636-amino-acid polypeptide reads, in one-letter code: DNA primase (636 aa).

The CHC2-type zinc finger occupies 44–68; sequence CPFHDEKTPSFHVRPNHGHFHCFGC. Residues 266–352 enclose the Toprim domain; sequence HQAVVVEGYT…SGQSFVAVAA (87 aa). Mg(2+) contacts are provided by glutamate 272, aspartate 323, and aspartate 325. Residues 443 to 459 are compositionally biased toward basic and acidic residues; the sequence is REEAKGGGRKDNNRRGQ. A disordered region spans residues 443–481; that stretch reads REEAKGGGRKDNNRRGQETAARPKPPPVQRPDPTDPTLW.

It belongs to the DnaG primase family. Monomer. Interacts with DnaB. The cofactor is Zn(2+). It depends on Mg(2+) as a cofactor.

It catalyses the reaction ssDNA + n NTP = ssDNA/pppN(pN)n-1 hybrid + (n-1) diphosphate.. In terms of biological role, RNA polymerase that catalyzes the synthesis of short RNA molecules used as primers for DNA polymerase during DNA replication. The protein is DNA primase of Mycolicibacterium smegmatis (strain ATCC 700084 / mc(2)155) (Mycobacterium smegmatis).